We begin with the raw amino-acid sequence, 272 residues long: HMP-PP phosphatase (272 aa).

The active-site Nucleophile is aspartate 8. 3 residues coordinate Mg(2+): aspartate 8, aspartate 10, and aspartate 212.

The protein belongs to the HAD-like hydrolase superfamily. Cof family. The cofactor is Mg(2+).

The catalysed reaction is 4-amino-2-methyl-5-(diphosphooxymethyl)pyrimidine + H2O = 4-amino-2-methyl-5-(phosphooxymethyl)pyrimidine + phosphate + H(+). Its function is as follows. Catalyzes the hydrolysis of 4-amino-2-methyl-5-hydroxymethylpyrimidine pyrophosphate (HMP-PP) to 4-amino-2-methyl-5-hydroxymethylpyrimidine phosphate (HMP-P). The sequence is that of HMP-PP phosphatase from Escherichia coli (strain UTI89 / UPEC).